The chain runs to 400 residues: Na(+)/H(+) antiporter NhaA (400 aa).

Transmembrane regions (helical) follow at residues 26–46, 71–91, 107–127, 137–157, 166–186, 189–209, 212–232, 233–253, 273–293, 299–319, 340–360, and 373–393; these read AGGI…NSPL, LIHW…GMEV, IFPA…YWFI, GWAI…ALLS, IFLL…IALF, HGLS…LILL, FKVS…ASVL, KSGV…PLKG, FVIL…GIDV, PLLL…IFGF, IFAV…LASL, and LSRL…YLFL.

It belongs to the NhaA Na(+)/H(+) (TC 2.A.33) antiporter family.

The protein resides in the cell inner membrane. It carries out the reaction Na(+)(in) + 2 H(+)(out) = Na(+)(out) + 2 H(+)(in). Functionally, na(+)/H(+) antiporter that extrudes sodium in exchange for external protons. This chain is Na(+)/H(+) antiporter NhaA, found in Haemophilus influenzae (strain PittEE).